The following is a 349-amino-acid chain: N-acetyltaurine hydrolase (349 aa).

A divalent metal cation contacts are provided by His26, His28, Glu169, His201, His230, and Asp298.

The protein belongs to the metallo-dependent hydrolases superfamily. Phosphotriesterase family. A divalent metal cation serves as cofactor.

Its subcellular location is the cytoplasm. The protein localises to the cytosol. The catalysed reaction is N-acetyltaurine + H2O = taurine + acetate. It catalyses the reaction N-propanoyltaurine + H2O = propanoate + taurine. It carries out the reaction N-acetyl-L-methionine + H2O = L-methionine + acetate. The enzyme catalyses N-acetyl-L-isoleucine + H2O = L-isoleucine + acetate. The catalysed reaction is N-acetyl-L-leucine + H2O = L-leucine + acetate. It catalyses the reaction N-acetyl-L-valine + H2O = L-valine + acetate. In terms of biological role, N-acetyltaurine hydrolase that regulates feeding by catalyzing the hydrolysis of N-acetyltaurine into taurine and acetate. N-acetyltaurine has anorexigenic and anti-obesity effects that are dependent on GFRAL receptor and GDF15. PTER also acts on other N-acetyl amino acids (Met, Ile, Leu, Val) and N-propionyltaurine, but at lower rates. This Homo sapiens (Human) protein is N-acetyltaurine hydrolase.